The primary structure comprises 396 residues: Elongation factor Tu (396 aa).

In terms of domain architecture, tr-type G spans 11 to 205 (KPHVNIGTIG…TIDEYIPTPV (195 aa)). The G1 stretch occupies residues 20 to 27 (GHVDHGKT). 20 to 27 (GHVDHGKT) contributes to the GTP binding site. Thr27 contacts Mg(2+). The interval 61-65 (GITIN) is G2. The interval 82–85 (DAPG) is G3. GTP contacts are provided by residues 82–86 (DAPGH) and 137–140 (NKTD). The tract at residues 137–140 (NKTD) is G4. The interval 175-177 (SAL) is G5.

The protein belongs to the TRAFAC class translation factor GTPase superfamily. Classic translation factor GTPase family. EF-Tu/EF-1A subfamily. Monomer.

The protein localises to the cytoplasm. It carries out the reaction GTP + H2O = GDP + phosphate + H(+). Its function is as follows. GTP hydrolase that promotes the GTP-dependent binding of aminoacyl-tRNA to the A-site of ribosomes during protein biosynthesis. The sequence is that of Elongation factor Tu from Lacticaseibacillus casei (strain BL23) (Lactobacillus casei).